Here is a 162-residue protein sequence, read N- to C-terminus: Large ribosomal subunit protein uL10 (162 aa).

Belongs to the universal ribosomal protein uL10 family. As to quaternary structure, part of the ribosomal stalk of the 50S ribosomal subunit. The N-terminus interacts with L11 and the large rRNA to form the base of the stalk. The C-terminus forms an elongated spine to which L12 dimers bind in a sequential fashion forming a multimeric L10(L12)X complex.

Forms part of the ribosomal stalk, playing a central role in the interaction of the ribosome with GTP-bound translation factors. In Borreliella burgdorferi (strain ATCC 35210 / DSM 4680 / CIP 102532 / B31) (Borrelia burgdorferi), this protein is Large ribosomal subunit protein uL10 (rplJ).